The following is a 363-amino-acid chain: Phospho-N-acetylmuramoyl-pentapeptide-transferase (363 aa).

Helical transmembrane passes span 4-24, 28-48, 72-92, 96-116, 129-149, 169-189, 200-220, 241-261, 266-286, 294-314, and 342-362; these read NLLV…NVIV, IAIL…IKYF, TPTM…LMLA, NIYV…GLID, INAT…CMIV, LTID…IGSS, GLVT…CYLA, ELTV…WYNI, IFMG…ISVI, GIIG…IYSI, and IVSR…SSLI.

Belongs to the glycosyltransferase 4 family. MraY subfamily. The cofactor is Mg(2+).

It localises to the cell inner membrane. It carries out the reaction UDP-N-acetyl-alpha-D-muramoyl-L-alanyl-gamma-D-glutamyl-meso-2,6-diaminopimeloyl-D-alanyl-D-alanine + di-trans,octa-cis-undecaprenyl phosphate = di-trans,octa-cis-undecaprenyl diphospho-N-acetyl-alpha-D-muramoyl-L-alanyl-D-glutamyl-meso-2,6-diaminopimeloyl-D-alanyl-D-alanine + UMP. The protein operates within cell wall biogenesis; peptidoglycan biosynthesis. Its function is as follows. Catalyzes the initial step of the lipid cycle reactions in the biosynthesis of the cell wall peptidoglycan: transfers peptidoglycan precursor phospho-MurNAc-pentapeptide from UDP-MurNAc-pentapeptide onto the lipid carrier undecaprenyl phosphate, yielding undecaprenyl-pyrophosphoryl-MurNAc-pentapeptide, known as lipid I. This chain is Phospho-N-acetylmuramoyl-pentapeptide-transferase, found in Orientia tsutsugamushi (strain Ikeda) (Rickettsia tsutsugamushi).